The sequence spans 449 residues: VIRF-1 (449 aa).

The interval 1-60 is disordered; sequence MDPGQRPNPFGAPGAIPKKPCLSQGSPGTSGSGAPCDEPSRSESPGEGPSGTGGSAAAGD. The segment at residues 89-195 is a DNA-binding region (IRF tryptophan pentad repeat); that stretch reads KASIKDWIVC…HHFLVFRVRK (107 aa). 2 positions are modified to N6-propionyllysine; by host: Lys-406 and Lys-442.

Belongs to the IRF family. Forms homodimers. Interacts with host IRF3, IRF7, and CREBBP. Interacts with host SYNCRIP. Interacts with host USP7. Interacts (via C-terminus) with host HERC5. Interacts with host GABARAPL1. Interacts with host SIRT6. Post-translationally, ISGylated. In terms of processing, propionylated in lysine residues Lys-406 and Lys-442, which is required for effective inhibition of IFN-beta production and antiviral signaling.

The protein localises to the host cytoplasm. Functionally, plays a role in the inhibition of host innate response by repressing the expression of interferon-inducible genes and blocking host IRF1- and IRF3-mediated transcription. Blocks the interaction between host IRF3 and CREBBP. Regulates the host cellular metabolism by increasing glucose uptake, ATP production and lactate secretion through down-regulation of heterogeneous nuclear ribonuclear protein Q1/SYNCRIP. Mechanistically, induces ubiquitination and degradation of SYNCRIP through the ubiquitin-proteasome pathway by recruiting KLHL3/CUL3 ubiquitin ligase complex. Disrupts host TP53 signaling pathway during viral infection by interacting with host USP7 and thereby decreasing the availability of USP7 for deubiquitinating and stabilizing TP53. Plays a role in the global inhibition of protein ISGylation by interacting with host HERC5 leading to its inhibition. Promotes its own propionylation by blocking SIRT6 interaction with ubiquitin-specific peptidase 10/USP10 leading to SIRT6 degradation via a ubiquitin-proteasome pathway. In turn, propionylation is required to block IRF3-CBP/p300 recruitment and to repress the STING DNA sensing pathway. Plays a role in the activation of mitophagy during infection via interaction with the host proteins NIX/BNIP3L, TUFM and GABARAPL1 thereby inhibiting antiviral responses and contributing to productive replication. The sequence is that of VIRF-1 (vIRF-1) from Homo sapiens (Human).